Here is a 578-residue protein sequence, read N- to C-terminus: Arginine--tRNA ligase (578 aa).

A 'HIGH' region motif is present at residues 127 to 137 (PNLAKEMHVGH).

It belongs to the class-I aminoacyl-tRNA synthetase family. In terms of assembly, monomer.

It localises to the cytoplasm. The enzyme catalyses tRNA(Arg) + L-arginine + ATP = L-arginyl-tRNA(Arg) + AMP + diphosphate. This chain is Arginine--tRNA ligase, found in Pseudomonas syringae pv. tomato (strain ATCC BAA-871 / DC3000).